The primary structure comprises 213 residues: Flagellar transcriptional regulator FlhC (213 aa).

The Zn(2+) site is built by Cys138, Cys141, Cys158, and Cys161.

This sequence belongs to the FlhC family. Heterohexamer composed of two FlhC and four FlhD subunits. Each FlhC binds a FlhD dimer, forming a heterotrimer, and a hexamer assembles by dimerization of two heterotrimers. Zn(2+) serves as cofactor.

It localises to the cytoplasm. Functions in complex with FlhD as a master transcriptional regulator that regulates transcription of several flagellar and non-flagellar operons by binding to their promoter region. Activates expression of class 2 flagellar genes, including fliA, which is a flagellum-specific sigma factor that turns on the class 3 genes. Also regulates genes whose products function in a variety of physiological pathways. The sequence is that of Flagellar transcriptional regulator FlhC from Cupriavidus metallidurans (strain ATCC 43123 / DSM 2839 / NBRC 102507 / CH34) (Ralstonia metallidurans).